A 274-amino-acid polypeptide reads, in one-letter code: Outer surface protein A (274 aa).

An N-terminal signal peptide occupies residues 1 to 16; the sequence is MKKYLLGIGLILALIA. The N-palmitoyl cysteine moiety is linked to residue cysteine 17. Cysteine 17 is lipidated: S-diacylglycerol cysteine.

Belongs to the OspA lipoprotein family.

The protein localises to the cell outer membrane. It localises to the cell surface. The chain is Outer surface protein A from Borreliella burgdorferi (Lyme disease spirochete).